We begin with the raw amino-acid sequence, 131 residues long: Small ribosomal subunit protein uS11 (131 aa).

Belongs to the universal ribosomal protein uS11 family. As to quaternary structure, part of the 30S ribosomal subunit. Interacts with proteins S7 and S18. Binds to IF-3.

Functionally, located on the platform of the 30S subunit, it bridges several disparate RNA helices of the 16S rRNA. Forms part of the Shine-Dalgarno cleft in the 70S ribosome. In Endomicrobium trichonymphae, this protein is Small ribosomal subunit protein uS11.